The sequence spans 318 residues: 4-hydroxy-3-methylbut-2-enyl diphosphate reductase (318 aa).

[4Fe-4S] cluster is bound at residue Cys-12. The (2E)-4-hydroxy-3-methylbut-2-enyl diphosphate site is built by His-41 and His-74. Residues His-41 and His-74 each contribute to the dimethylallyl diphosphate site. Isopentenyl diphosphate-binding residues include His-41 and His-74. Residue Cys-96 coordinates [4Fe-4S] cluster. Residue His-124 participates in (2E)-4-hydroxy-3-methylbut-2-enyl diphosphate binding. His-124 is a dimethylallyl diphosphate binding site. Residue His-124 coordinates isopentenyl diphosphate. Glu-126 (proton donor) is an active-site residue. Thr-168 provides a ligand contact to (2E)-4-hydroxy-3-methylbut-2-enyl diphosphate. Residue Cys-198 participates in [4Fe-4S] cluster binding. The (2E)-4-hydroxy-3-methylbut-2-enyl diphosphate site is built by Ser-226, Ser-227, Asn-228, and Ser-270. Ser-226, Ser-227, Asn-228, and Ser-270 together coordinate dimethylallyl diphosphate. Residues Ser-226, Ser-227, Asn-228, and Ser-270 each contribute to the isopentenyl diphosphate site.

The protein belongs to the IspH family. [4Fe-4S] cluster serves as cofactor.

It carries out the reaction isopentenyl diphosphate + 2 oxidized [2Fe-2S]-[ferredoxin] + H2O = (2E)-4-hydroxy-3-methylbut-2-enyl diphosphate + 2 reduced [2Fe-2S]-[ferredoxin] + 2 H(+). The enzyme catalyses dimethylallyl diphosphate + 2 oxidized [2Fe-2S]-[ferredoxin] + H2O = (2E)-4-hydroxy-3-methylbut-2-enyl diphosphate + 2 reduced [2Fe-2S]-[ferredoxin] + 2 H(+). It functions in the pathway isoprenoid biosynthesis; dimethylallyl diphosphate biosynthesis; dimethylallyl diphosphate from (2E)-4-hydroxy-3-methylbutenyl diphosphate: step 1/1. The protein operates within isoprenoid biosynthesis; isopentenyl diphosphate biosynthesis via DXP pathway; isopentenyl diphosphate from 1-deoxy-D-xylulose 5-phosphate: step 6/6. Catalyzes the conversion of 1-hydroxy-2-methyl-2-(E)-butenyl 4-diphosphate (HMBPP) into a mixture of isopentenyl diphosphate (IPP) and dimethylallyl diphosphate (DMAPP). Acts in the terminal step of the DOXP/MEP pathway for isoprenoid precursor biosynthesis. This is 4-hydroxy-3-methylbut-2-enyl diphosphate reductase from Psychrobacter sp. (strain PRwf-1).